A 255-amino-acid chain; its full sequence is MTLTIKEVTQLINAVNTIEELENHECFLDERKGVQNAIARRRKALEKEQALKEKYVEMTYFENEILKENPNAIICGIDEVGRGPLAGPVVACAPILNSNHNYLGLDDSKKVPVTKRLELNEALKNEVTAFAFGIATAEEIDEFNIYKATQIAMQRAIDGLSVQPTHLLIDAMTLDNALPQVSLIKGDARSVSIAAASIMAKVFRDDYMTQLSKDYPEYGFEKNAGYGTKQHLLAIDDIGIMKEHRKSFEPIKSLL.

The RNase H type-2 domain maps to 72–255 (AIICGIDEVG…KSFEPIKSLL (184 aa)). A divalent metal cation contacts are provided by aspartate 78, glutamate 79, and aspartate 170.

It belongs to the RNase HII family. Mn(2+) serves as cofactor. It depends on Mg(2+) as a cofactor.

The protein localises to the cytoplasm. The enzyme catalyses Endonucleolytic cleavage to 5'-phosphomonoester.. Endonuclease that specifically degrades the RNA of RNA-DNA hybrids. The chain is Ribonuclease HII from Staphylococcus aureus (strain bovine RF122 / ET3-1).